A 374-amino-acid chain; its full sequence is Dihydrolipoyllysine-residue acetyltransferase component of acetoin cleaving system (374 aa).

Positions 9–84 (IIPIVMPKWG…PVKALLGVLA (76 aa)) constitute a Lipoyl-binding domain. Position 50 is an N6-lipoyllysine (K50). The AB hydrolase-1 domain maps to 137–360 (TVLFIHGFGG…DAGHMSQMEK (224 aa)).

Requires (R)-lipoate as cofactor.

The catalysed reaction is N(6)-[(R)-dihydrolipoyl]-L-lysyl-[protein] + acetyl-CoA = N(6)-[(R)-S(8)-acetyldihydrolipoyl]-L-lysyl-[protein] + CoA. The protein operates within ketone degradation; acetoin degradation. Dihydrolipoamide acetyltransferase involved in acetoin catabolism. The chain is Dihydrolipoyllysine-residue acetyltransferase component of acetoin cleaving system (acoC) from Cupriavidus necator (strain ATCC 17699 / DSM 428 / KCTC 22496 / NCIMB 10442 / H16 / Stanier 337) (Ralstonia eutropha).